A 233-amino-acid polypeptide reads, in one-letter code: Zinc import ATP-binding protein ZnuC (233 aa).

The ABC transporter domain maps to 6-222 (IEFRNVSKKF…SEFSNALSAL (217 aa)). Residue 38 to 45 (GPNGAGKT) participates in ATP binding.

Belongs to the ABC transporter superfamily. Zinc importer (TC 3.A.1.15.5) family. The complex is composed of two ATP-binding proteins (ZnuC), two transmembrane proteins (ZnuB) and a solute-binding protein (ZnuA).

It is found in the cell inner membrane. It carries out the reaction Zn(2+)(out) + ATP(in) + H2O(in) = Zn(2+)(in) + ADP(in) + phosphate(in) + H(+)(in). In terms of biological role, part of the ABC transporter complex ZnuABC involved in zinc import. Responsible for energy coupling to the transport system. This Rickettsia conorii (strain ATCC VR-613 / Malish 7) protein is Zinc import ATP-binding protein ZnuC.